We begin with the raw amino-acid sequence, 124 residues long: Histone H2A (124 aa).

Residues 1–18 are compositionally biased toward basic residues; the sequence is MSGRGKGGKVKGKAKSRS. Residues 1–21 are disordered; the sequence is MSGRGKGGKVKGKAKSRSNRA. N-acetylserine is present on serine 2. Serine 2 carries the post-translational modification Phosphoserine. Position 36 is an N6-succinyllysine (lysine 36). Glutamine 104 carries the post-translational modification N5-methylglutamine. Lysine 119 participates in a covalent cross-link: Glycyl lysine isopeptide (Lys-Gly) (interchain with G-Cter in ubiquitin). Threonine 120 bears the Phosphothreonine mark.

The protein belongs to the histone H2A family. As to quaternary structure, the nucleosome is a histone octamer containing two molecules each of H2A, H2B, H3 and H4 assembled in one H3-H4 heterotetramer and two H2A-H2B heterodimers. The octamer wraps approximately 147 bp of DNA. Post-translationally, the chromatin-associated form, but not the free cytoplasmic form, is phosphorylated on Thr-120 by NHK-1 during mitosis, and dephosphorylated during S-phase. Also phosphorylated on Thr-120 by NHK-1 during prophase I of meiosis; which is required for acetylation of H3 'Lys-14' and H4 'Lys-5', diassembly of the synaptonemal complex, and karyosome formation. In terms of processing, monoubiquitination of Lys-119 by sce/dRING gives a specific tag for epigenetic transcriptional repression. Phosphorylation on Ser-2 is enhanced during mitosis. Phosphorylation on Ser-2 directly represses transcription.

Its subcellular location is the nucleus. The protein localises to the chromosome. Functionally, core component of nucleosome. Nucleosomes wrap and compact DNA into chromatin, limiting DNA accessibility to the cellular machineries which require DNA as a template. Histones thereby play a central role in transcription regulation, DNA repair, DNA replication and chromosomal stability. DNA accessibility is regulated via a complex set of post-translational modifications of histones, also called histone code, and nucleosome remodeling. The protein is Histone H2A (His2A) of Drosophila erecta (Fruit fly).